The primary structure comprises 419 residues: Enolase (419 aa).

Q161 contributes to the (2R)-2-phosphoglycerate binding site. Residue E205 is the Proton donor of the active site. The Mg(2+) site is built by D240, E283, and D309. Residues K334, R363, S364, and K385 each contribute to the (2R)-2-phosphoglycerate site. K334 acts as the Proton acceptor in catalysis.

The protein belongs to the enolase family. Mg(2+) is required as a cofactor.

The protein localises to the cytoplasm. It localises to the secreted. The protein resides in the cell surface. It carries out the reaction (2R)-2-phosphoglycerate = phosphoenolpyruvate + H2O. The protein operates within carbohydrate degradation; glycolysis; pyruvate from D-glyceraldehyde 3-phosphate: step 4/5. In terms of biological role, catalyzes the reversible conversion of 2-phosphoglycerate (2-PG) into phosphoenolpyruvate (PEP). It is essential for the degradation of carbohydrates via glycolysis. The protein is Enolase of Saccharolobus islandicus (strain L.S.2.15 / Lassen #1) (Sulfolobus islandicus).